Consider the following 682-residue polypeptide: MIDQYKHQQLQIGLVSPQQIKAWANKNLPNGEVIGQVTRPSTFHYKTDKPEKDGLFCERIFGPIKSGICACGNSRASGAENEDERFCQKCGVEFADSRIRRYQMGYIKLACPVTHVWYLKGLPSYIANLLDKPLKKLEGLVYGDFSFARPSTKKPTFLRLRGLFEEEIASCNHSISPFFSTPSFTTFRNREIATGAGAIREQLADLDLQIIIENSLVEWKELEDEGYSGDEWEDRKRRIRKVFLIRRMQLAKHFIQTNVEPEWMVLCLLPVLPPELRPIVYRSGDKVVTSDINELYKRVIRRNNNLAYLLKRSELAPADLVMCQEKLVQEAVDTLLDSGSRGQPTRDGHNKVYKSLSDVIEGKEGRFRETLLGKRVDYSGRSVIVVGPSLSLHQCGLPLEIAIKLFQLFVIRDLITKRATSNVRIAKRKIWEKEPIVWEILQEVMRGHPVLLNRAPTLHRLGIQAFQPTLVEGRTISLHPLVCKGFNADFDGDQMAVHLPLSLEAQAEARLLMFSHMNLLSPAIGDPICVPTQDMLIGLYVLTIGNPRGICANRYNSCGNYPNQKVNYNNNNSTYTRDKEPIFYSSYDALGAYRQKLISLDSPLWLRWKLDQRAIGSREVPIEVQYESLGTYHEIYAHYLIVGNRKKEICSIYIRTTLGHISFYREIEEAVQGFSQAYSYTI.

Zn(2+) is bound by residues cysteine 69, cysteine 71, cysteine 87, and cysteine 90. Residues aspartate 489, aspartate 491, and aspartate 493 each contribute to the Mg(2+) site.

It belongs to the RNA polymerase beta' chain family. RpoC1 subfamily. As to quaternary structure, in plastids the minimal PEP RNA polymerase catalytic core is composed of four subunits: alpha, beta, beta', and beta''. When a (nuclear-encoded) sigma factor is associated with the core the holoenzyme is formed, which can initiate transcription. Mg(2+) is required as a cofactor. Zn(2+) serves as cofactor.

It is found in the plastid. Its subcellular location is the chloroplast. It carries out the reaction RNA(n) + a ribonucleoside 5'-triphosphate = RNA(n+1) + diphosphate. Functionally, DNA-dependent RNA polymerase catalyzes the transcription of DNA into RNA using the four ribonucleoside triphosphates as substrates. The protein is DNA-directed RNA polymerase subunit beta' of Brachypodium distachyon (Purple false brome).